Reading from the N-terminus, the 62-residue chain is Protein YmcF (62 aa).

It belongs to the YmcF/YnqF peptide family.

This is Protein YmcF from Escherichia coli (strain K12).